Consider the following 354-residue polypeptide: Sphingosine-1-phosphate phosphatase 2 (354 aa).

4 helical membrane passes run 43-63 (YLFR…FLPF), 76-96 (LVVI…ILKW), 115-135 (YGMP…LLIS), and 140-160 (YQYP…LVCL). Positions 91 to 99 (KDILKWPRP) are phosphatase sequence motif I. The interval 118 to 121 (PSTH) is phosphatase sequence motif II. Histidine 121 functions as the Proton donor in the catalytic mechanism. Residues 161-172 (SRLYTGMHTVLD) form a phosphatase sequence motif III region. Histidine 168 (nucleophile) is an active-site residue. 5 helical membrane-spanning segments follow: residues 173 to 193 (ILGG…AWTL), 202 to 222 (PLFP…YPVS), 235 to 255 (IVAA…FQLV), 273 to 293 (TDML…ILLV), and 334 to 354 (TSVG…LGLL).

It belongs to the type 2 lipid phosphate phosphatase family. In terms of tissue distribution, highly expressed in pancreatic islets. Expressed in lung, small interstince, colon, kideny and brain.

The protein resides in the endoplasmic reticulum membrane. The catalysed reaction is sphinganine 1-phosphate + H2O = sphinganine + phosphate. It catalyses the reaction sphing-4-enine 1-phosphate + H2O = sphing-4-enine + phosphate. It carries out the reaction (4R)-hydroxysphinganine 1-phosphate + H2O = (4R)-hydroxysphinganine + phosphate. Its function is as follows. Has specific phosphohydrolase activity towards sphingoid base 1-phosphates. Has high phosphohydrolase activity against dihydrosphingosine-1-phosphate and sphingosine-1-phosphate (S1P) in vitro. Sphingosine-1-phosphate phosphatase activity is needed for efficient recycling of sphingosine into the sphingolipid synthesis pathway. May play a role in attenuating intracellular sphingosine 1-phosphate (S1P) signaling. May play a role in pro-inflammatory signaling. Plays a role in the regulation of pancreatic islet beta-cell endoplasmic reticulum stress and proliferation. This Mus musculus (Mouse) protein is Sphingosine-1-phosphate phosphatase 2.